The chain runs to 74 residues: uncharacterized protein (74 aa).

The stretch at 29–63 (LNSKKSALQKDKELQQQAKAQESALAGEELRRRAL) forms a coiled coil.

This is an uncharacterized protein from Pseudoalteromonas phage PM2 (Bacteriophage PM2).